A 282-amino-acid polypeptide reads, in one-letter code: Structure-specific endonuclease subunit slx1 (282 aa).

The GIY-YIG domain occupies 7 to 97 (GFYGVYLLFC…RLTHVPRKTK (91 aa)). Residues 191-243 (CRVCYERVQDKDDSLHCFHPGCTLTAHIMCLAKLFLLNEPQNLIPVEGLCPSC) form an SLX1-type zinc finger.

Belongs to the SLX1 family. Forms a heterodimer with slx4. The cofactor is a divalent metal cation.

It is found in the nucleus. Its function is as follows. Catalytic subunit of the slx1-slx4 structure-specific endonuclease that resolves DNA secondary structures generated during DNA repair and recombination. Has endonuclease activity towards branched DNA substrates, introducing single-strand cuts in duplex DNA close to junctions with ss-DNA. This is Structure-specific endonuclease subunit slx1 (slx1a) from Xenopus laevis (African clawed frog).